The primary structure comprises 286 residues: uncharacterized protein (286 aa).

The region spanning 26–268 (PLIILCHGFC…DACHYDIYEG (243 aa)) is the AB hydrolase-1 domain.

This sequence to E.coli YcjY.

This is an uncharacterized protein from Escherichia coli.